The following is a 455-amino-acid chain: Ribosomal protein uS12 methylthiotransferase RimO (455 aa).

Positions methionine 1 to arginine 114 constitute an MTTase N-terminal domain. Positions 10, 46, 78, 166, 170, and 173 each coordinate [4Fe-4S] cluster. In terms of domain architecture, Radical SAM core spans threonine 152 to threonine 383. A TRAM domain is found at glutamine 386–serine 455.

This sequence belongs to the methylthiotransferase family. RimO subfamily. [4Fe-4S] cluster is required as a cofactor.

It localises to the cytoplasm. The catalysed reaction is L-aspartate(89)-[ribosomal protein uS12]-hydrogen + (sulfur carrier)-SH + AH2 + 2 S-adenosyl-L-methionine = 3-methylsulfanyl-L-aspartate(89)-[ribosomal protein uS12]-hydrogen + (sulfur carrier)-H + 5'-deoxyadenosine + L-methionine + A + S-adenosyl-L-homocysteine + 2 H(+). Functionally, catalyzes the methylthiolation of an aspartic acid residue of ribosomal protein uS12. This Chloroflexus aurantiacus (strain ATCC 29366 / DSM 635 / J-10-fl) protein is Ribosomal protein uS12 methylthiotransferase RimO.